A 613-amino-acid polypeptide reads, in one-letter code: Histone acetyltransferase KAT7 (613 aa).

A disordered region spans residues M1 to R175. 5 positions are modified to phosphoserine: S12, S52, S55, S59, and S66. Over residues V44–S59 the composition is skewed to low complexity. 2 positions are modified to phosphothreonine: T87 and T90. The span at Q98–E107 shows a compositional bias: polar residues. S104 carries the phosphoserine modification. T106 is subject to Phosphothreonine. Residues F112–P127 are compositionally biased toward basic and acidic residues. A phosphoserine mark is found at S113 and S126. T130 carries the phosphothreonine modification. Positions P136–P147 are enriched in low complexity. Residues S150–H170 are compositionally biased toward basic and acidic residues. Residues S160, S164, S166, and S180 each carry the phosphoserine modification. Residues H178–E221 form a CCHHC-type zinc finger. Residues K201 and K279 each carry the N6-acetyllysine modification. K325 is covalently cross-linked (Glycyl lysine isopeptide (Lys-Gly) (interchain with G-Cter in SUMO2)). An MYST-type HAT domain is found at E334–P609. K340 is covalently cross-linked (Glycyl lysine isopeptide (Lys-Gly) (interchain with G-Cter in ubiquitin)). A C2HC MYST-type zinc finger spans residues L367–W392. C370, C373, H386, and C390 together coordinate Zn(2+). K434 carries the N6-acetyllysine; by autocatalysis modification. Acetyl-CoA-binding positions include I477 to T479 and R485 to K490. S508 carries the post-translational modification Phosphoserine. The Proton donor/acceptor role is filled by E510. S514 and S523 together coordinate acetyl-CoA.

Belongs to the MYST (SAS/MOZ) family. In terms of assembly, component of the HBO1 complex composed of KAT7/HBO1, MEAF6, ING4 or ING5, and one scaffold subunit: complexes containing BRPF scaffold (BRPF1, BRD1/BRPF2 or BRPF3) direct KAT7/HBO1 specificity towards H3K14ac, while complexes containing JADE scaffold (JADE1, JADE2 and JADE3) mediate acetylation of histone H4. Interacts with MCM2 and ORC1. Interacts with the androgen receptor (AR) in the presence of dihydrotestosterone. Interacts with CDT1. Interacts with MAP2K1 and CUL1. Interacts with p53/TP53; leading to inhibit histone acetyltransferase activity. Post-translationally, phosphorylated at Ser-52 and Ser-55 by ATR in response to DNA damage, promoting its ubiquitination by the CRL4(DDB2) complex and subsequent degradation. Phosphorylation at Ser-52 and Ser-55 by ATR in response to ultraviolet-induced DNA, promotes localization to DNA damage sites. Phosphorylation at Ser-59 by PLK1 during mitosis seems important for prereplicative complex formation and DNA replication licensing, and requires prior phosphorylation at Thr-87 and Thr-90 by CDK1. Phosphorylated by MAP2K1, which accelerates its degradation. Ubiquitinated at Lys-340, leading to proteasomal degradation. Ubiquitinated by the CRL4(DDB2) complex following phosphorylation by ATR, leading to its subsequent degradation. In terms of processing, autoacetylation at Lys-434 is required for proper function. In terms of tissue distribution, widely expressed in adult tissues.

Its subcellular location is the nucleus. The protein resides in the chromosome. It is found in the centromere. It localises to the cytoplasm. The protein localises to the cytosol. It carries out the reaction L-lysyl-[protein] + acetyl-CoA = N(6)-acetyl-L-lysyl-[protein] + CoA + H(+). With respect to regulation, histone acetyltransferase activity is inhibited by GMNN in the context of a complex with CDT1, inhibiting histone H4 acetylation and DNA replication licensing. Catalytic subunit of histone acetyltransferase HBO1 complexes, which specifically mediate acetylation of histone H3 at 'Lys-14' (H3K14ac), thereby regulating various processes, such as gene transcription, protein ubiquitination, immune regulation, stem cell pluripotent and self-renewal maintenance and embryonic development. Some complexes also catalyze acetylation of histone H4 at 'Lys-5', 'Lys-8' and 'Lys-12' (H4K5ac, H4K8ac and H4K12ac, respectively), regulating DNA replication initiation, regulating DNA replication initiation. Specificity of the HBO1 complexes is determined by the scaffold subunit: complexes containing BRPF scaffold (BRPF1, BRD1/BRPF2 or BRPF3) direct KAT7/HBO1 specificity towards H3K14ac, while complexes containing JADE (JADE1, JADE2 and JADE3) scaffold direct KAT7/HBO1 specificity towards histone H4. H3K14ac promotes transcriptional elongation by facilitating the processivity of RNA polymerase II. Acts as a key regulator of hematopoiesis by forming a complex with BRD1/BRPF2, directing KAT7/HBO1 specificity towards H3K14ac and promoting erythroid differentiation. H3K14ac is also required for T-cell development. KAT7/HBO1-mediated acetylation facilitates two consecutive steps, licensing and activation, in DNA replication initiation: H3K14ac facilitates the activation of replication origins, and histone H4 acetylation (H4K5ac, H4K8ac and H4K12ac) facilitates chromatin loading of MCM complexes, promoting DNA replication licensing. Acts as a positive regulator of centromeric CENPA assembly: recruited to centromeres and mediates histone acetylation, thereby preventing centromere inactivation mediated by SUV39H1, possibly by increasing histone turnover/exchange. Involved in nucleotide excision repair: phosphorylation by ATR in response to ultraviolet irradiation promotes its localization to DNA damage sites, where it mediates histone acetylation to facilitate recruitment of XPC at the damaged DNA sites. Acts as an inhibitor of NF-kappa-B independently of its histone acetyltransferase activity. Its function is as follows. Plays a central role in the maintenance of leukemia stem cells in acute myeloid leukemia (AML). Acts by mediating acetylation of histone H3 at 'Lys-14' (H3K14ac), thereby facilitating the processivity of RNA polymerase II to maintain the high expression of key genes, such as HOXA9 and HOXA10 that help to sustain the functional properties of leukemia stem cells. The sequence is that of Histone acetyltransferase KAT7 from Mus musculus (Mouse).